A 165-amino-acid polypeptide reads, in one-letter code: Cyclic pyranopterin monophosphate synthase (165 aa).

Substrate is bound by residues 79-81 (LCH) and 117-118 (ME). Asp132 is a catalytic residue.

The protein belongs to the MoaC family. Homohexamer; trimer of dimers.

It catalyses the reaction (8S)-3',8-cyclo-7,8-dihydroguanosine 5'-triphosphate = cyclic pyranopterin phosphate + diphosphate. It participates in cofactor biosynthesis; molybdopterin biosynthesis. Functionally, catalyzes the conversion of (8S)-3',8-cyclo-7,8-dihydroguanosine 5'-triphosphate to cyclic pyranopterin monophosphate (cPMP). This is Cyclic pyranopterin monophosphate synthase from Chloroflexus aggregans (strain MD-66 / DSM 9485).